Reading from the N-terminus, the 292-residue chain is 4-hydroxy-tetrahydrodipicolinate synthase (292 aa).

Threonine 44 is a binding site for pyruvate. Tyrosine 132 functions as the Proton donor/acceptor in the catalytic mechanism. The Schiff-base intermediate with substrate role is filled by lysine 160. Isoleucine 202 contacts pyruvate.

It belongs to the DapA family. As to quaternary structure, homotetramer; dimer of dimers.

Its subcellular location is the cytoplasm. It catalyses the reaction L-aspartate 4-semialdehyde + pyruvate = (2S,4S)-4-hydroxy-2,3,4,5-tetrahydrodipicolinate + H2O + H(+). It functions in the pathway amino-acid biosynthesis; L-lysine biosynthesis via DAP pathway; (S)-tetrahydrodipicolinate from L-aspartate: step 3/4. Functionally, catalyzes the condensation of (S)-aspartate-beta-semialdehyde [(S)-ASA] and pyruvate to 4-hydroxy-tetrahydrodipicolinate (HTPA). The polypeptide is 4-hydroxy-tetrahydrodipicolinate synthase (Magnetococcus marinus (strain ATCC BAA-1437 / JCM 17883 / MC-1)).